A 293-amino-acid chain; its full sequence is AKT-interacting protein homolog A (293 aa).

Over residues 1 to 11 (MNPFWNMSSAS) the composition is skewed to polar residues. The interval 1 to 45 (MNPFWNMSSASVRKRSENDEKISTGDQKISPPRSSSAKKQLPPIP) is disordered. The span at 14–23 (KRSENDEKIS) shows a compositional bias: basic and acidic residues. Residues 24–38 (TGDQKISPPRSSSAK) show a composition bias toward polar residues. Residues 75–223 (YLEYSLLAEF…VVDSVKLCNS (149 aa)) enclose the UBC core domain. Basic and acidic residues predominate over residues 256–266 (AQKKKSEEQSK). Residues 256 to 293 (AQKKKSEEQSKGLHVSGLSWVKPGSVLPFSKEENSLQT) form a disordered region.

Belongs to the ubiquitin-conjugating enzyme family. FTS subfamily.

Its subcellular location is the cytoplasm. The protein localises to the cell membrane. Its function is as follows. May function to promote vesicle trafficking and/or fusion. May also regulate apoptosis. This chain is AKT-interacting protein homolog A (aktip-a), found in Xenopus laevis (African clawed frog).